We begin with the raw amino-acid sequence, 163 residues long: Phosphopantetheine adenylyltransferase (163 aa).

T10 contacts substrate. ATP-binding positions include 10 to 11 and H18; that span reads TF. 3 residues coordinate substrate: K42, L75, and R89. Residues 90–92, E100, and 125–131 contribute to the ATP site; these read GVR and YTYVASS.

Belongs to the bacterial CoaD family. Homohexamer. Mg(2+) is required as a cofactor.

It is found in the cytoplasm. It catalyses the reaction (R)-4'-phosphopantetheine + ATP + H(+) = 3'-dephospho-CoA + diphosphate. The protein operates within cofactor biosynthesis; coenzyme A biosynthesis; CoA from (R)-pantothenate: step 4/5. Its function is as follows. Reversibly transfers an adenylyl group from ATP to 4'-phosphopantetheine, yielding dephospho-CoA (dPCoA) and pyrophosphate. This Pelodictyon phaeoclathratiforme (strain DSM 5477 / BU-1) protein is Phosphopantetheine adenylyltransferase.